Here is a 506-residue protein sequence, read N- to C-terminus: Cobyric acid synthase (506 aa).

Positions 254–453 (DLDIAVIRLP…IHGIFESDSF (200 aa)) constitute a GATase cobBQ-type domain. Cysteine 334 acts as the Nucleophile in catalysis. Residue histidine 445 is part of the active site.

It belongs to the CobB/CobQ family. CobQ subfamily.

The protein operates within cofactor biosynthesis; adenosylcobalamin biosynthesis. Its function is as follows. Catalyzes amidations at positions B, D, E, and G on adenosylcobyrinic A,C-diamide. NH(2) groups are provided by glutamine, and one molecule of ATP is hydrogenolyzed for each amidation. The chain is Cobyric acid synthase from Dehalococcoides mccartyi (strain ATCC BAA-2266 / KCTC 15142 / 195) (Dehalococcoides ethenogenes (strain 195)).